The chain runs to 582 residues: Regulatory solute carrier protein family 1 member 1 (582 aa).

Disordered regions lie at residues 1 to 32 (MSSL…ARSV), 56 to 76 (KASA…LQVL), 143 to 180 (EKSW…VPQD), 303 to 325 (VDMS…HGQP), 363 to 384 (VTCQ…SGRR), 390 to 409 (LTPS…SESG), 426 to 452 (ASTS…ESAR), and 483 to 529 (SEGA…LSTP). Residues 16-32 (SGQSPEVGSPTSLARSV) are compositionally biased toward polar residues. The segment covering 148 to 179 (PENQTPSPVNGLQQHRETGSVQREAGQQSVPQ) has biased composition (polar residues). A compositionally biased stretch (polar residues) spans 390–408 (LTPSDQYSQGSCHQATSES). Composition is skewed to basic and acidic residues over residues 438–452 (SPDR…ESAR) and 490–503 (PSEH…DRPE). One can recognise a UBA domain in the interval 536 to 576 (IFPAADVDRILGAGFTLQEALGALHRVGGNADLALLVLLAK).

Interacts with YRDC. In terms of tissue distribution, expressed in epithelial and subepithelial cells of small intestine.

It localises to the cell membrane. It is found in the nucleus. The protein resides in the golgi apparatus. The protein localises to the trans-Golgi network. In terms of biological role, mediates transcriptional and post-transcriptional regulation of SLC5A1. Inhibits a dynamin and PKC-dependent exocytotic pathway of SLC5A1. Also involved in transcriptional regulation of SLC22A2. Exhibits glucose-dependent, short-term inhibition of SLC5A1 and SLC22A2 by inhibiting the release of vesicles from the trans-Golgi network. Regulates the expression of SLC5A1 in a tissue-specific manner and is specifically involved in its regulation in the small intestine. The protein is Regulatory solute carrier protein family 1 member 1 (Rsc1a1) of Mus musculus (Mouse).